We begin with the raw amino-acid sequence, 740 residues long: Phosphoribosylformylglycinamidine synthase subunit PurL (740 aa).

His53 is an active-site residue. ATP is bound by residues Tyr56 and Lys95. Glu97 contributes to the Mg(2+) binding site. Substrate contacts are provided by residues 98–101 (SHNH) and Arg120. The Proton acceptor role is filled by His99. Position 121 (Asp121) interacts with Mg(2+). Substrate is bound at residue Gln244. Asp272 provides a ligand contact to Mg(2+). Residue 316 to 318 (ESQ) participates in substrate binding. Residues Asp497 and Gly534 each coordinate ATP. Mg(2+) is bound at residue Asn535. Ser537 is a substrate binding site.

The protein belongs to the FGAMS family. Monomer. Part of the FGAM synthase complex composed of 1 PurL, 1 PurQ and 2 PurS subunits.

Its subcellular location is the cytoplasm. It carries out the reaction N(2)-formyl-N(1)-(5-phospho-beta-D-ribosyl)glycinamide + L-glutamine + ATP + H2O = 2-formamido-N(1)-(5-O-phospho-beta-D-ribosyl)acetamidine + L-glutamate + ADP + phosphate + H(+). It participates in purine metabolism; IMP biosynthesis via de novo pathway; 5-amino-1-(5-phospho-D-ribosyl)imidazole from N(2)-formyl-N(1)-(5-phospho-D-ribosyl)glycinamide: step 1/2. In terms of biological role, part of the phosphoribosylformylglycinamidine synthase complex involved in the purines biosynthetic pathway. Catalyzes the ATP-dependent conversion of formylglycinamide ribonucleotide (FGAR) and glutamine to yield formylglycinamidine ribonucleotide (FGAM) and glutamate. The FGAM synthase complex is composed of three subunits. PurQ produces an ammonia molecule by converting glutamine to glutamate. PurL transfers the ammonia molecule to FGAR to form FGAM in an ATP-dependent manner. PurS interacts with PurQ and PurL and is thought to assist in the transfer of the ammonia molecule from PurQ to PurL. In Rhodospirillum rubrum (strain ATCC 11170 / ATH 1.1.1 / DSM 467 / LMG 4362 / NCIMB 8255 / S1), this protein is Phosphoribosylformylglycinamidine synthase subunit PurL.